The following is a 347-amino-acid chain: Putative histone PARylation factor 1-like (347 aa).

At Met-1 the chain carries N-acetylmethionine. Lys-187 and Lys-234 each carry N6-acetyllysine.

It belongs to the HPF1 family.

This is Putative histone PARylation factor 1-like from Homo sapiens (Human).